The primary structure comprises 202 residues: Large ribosomal subunit protein uL13 (202 aa).

This sequence belongs to the universal ribosomal protein uL13 family.

The chain is Large ribosomal subunit protein uL13 from Caenorhabditis elegans.